A 355-amino-acid chain; its full sequence is UDP-3-O-acylglucosamine N-acyltransferase (355 aa).

Histidine 248 (proton acceptor) is an active-site residue.

Belongs to the transferase hexapeptide repeat family. LpxD subfamily. As to quaternary structure, homotrimer.

It catalyses the reaction a UDP-3-O-[(3R)-3-hydroxyacyl]-alpha-D-glucosamine + a (3R)-hydroxyacyl-[ACP] = a UDP-2-N,3-O-bis[(3R)-3-hydroxyacyl]-alpha-D-glucosamine + holo-[ACP] + H(+). The protein operates within bacterial outer membrane biogenesis; LPS lipid A biosynthesis. Functionally, catalyzes the N-acylation of UDP-3-O-acylglucosamine using 3-hydroxyacyl-ACP as the acyl donor. Is involved in the biosynthesis of lipid A, a phosphorylated glycolipid that anchors the lipopolysaccharide to the outer membrane of the cell. The chain is UDP-3-O-acylglucosamine N-acyltransferase from Syntrophobacter fumaroxidans (strain DSM 10017 / MPOB).